Reading from the N-terminus, the 230-residue chain is Putative N-acetylmannosamine-6-phosphate 2-epimerase (230 aa).

It belongs to the NanE family.

The catalysed reaction is an N-acyl-D-glucosamine 6-phosphate = an N-acyl-D-mannosamine 6-phosphate. The protein operates within amino-sugar metabolism; N-acetylneuraminate degradation; D-fructose 6-phosphate from N-acetylneuraminate: step 3/5. Its function is as follows. Converts N-acetylmannosamine-6-phosphate (ManNAc-6-P) to N-acetylglucosamine-6-phosphate (GlcNAc-6-P). This is Putative N-acetylmannosamine-6-phosphate 2-epimerase from Malacoplasma penetrans (strain HF-2) (Mycoplasma penetrans).